A 389-amino-acid chain; its full sequence is Major outer membrane porin (389 aa).

The signal sequence occupies residues 1-23 (MKKLLKSALLSAAFAGSVGSLQA).

The protein belongs to the chlamydial porin (CP) (TC 1.B.2) family. In terms of assembly, part of a disulfide cross-linked outer membrane complex (COMC) composed of the major outer membrane porin (MOMP), the small cysteine-rich protein (OmcA) and the large cysteine-rich periplasmic protein (OmcB).

It is found in the cell outer membrane. Its function is as follows. In elementary bodies (EBs, the infectious stage, which is able to survive outside the host cell) provides the structural integrity of the outer envelope through disulfide cross-links with the small cysteine-rich protein and the large cysteine-rich periplasmic protein. It has been described in publications as the Sarkosyl-insoluble COMC (Chlamydia outer membrane complex), and serves as the functional equivalent of peptidoglycan. Functionally, permits diffusion of specific solutes through the outer membrane. The sequence is that of Major outer membrane porin (ompA) from Chlamydia pneumoniae (Chlamydophila pneumoniae).